The chain runs to 276 residues: Cell wall synthesis protein KRE9 (276 aa).

An N-terminal signal peptide occupies residues 1–21; that stretch reads MRLQRNSIICALVFLVSFVLG.

It belongs to the KRE9/KNH1 family. In terms of processing, O-glycosylated.

The protein resides in the secreted. Its subcellular location is the cell wall. Its function is as follows. Involved in cell wall beta(1-&gt;6) glucan synthesis. This Saccharomyces cerevisiae (strain ATCC 204508 / S288c) (Baker's yeast) protein is Cell wall synthesis protein KRE9.